A 396-amino-acid chain; its full sequence is Cell adhesion molecule 3 (396 aa).

The signal sequence occupies residues 1 to 22 (MGAPSALPLLLLLACSWAPGGA). The Ig-like V-type domain maps to 23–124 (NLSQDDSQPW…VRTAKSLVTV (102 aa)). Topologically, residues 23–328 (NLSQDDSQPW…PVPSSSSTYH (306 aa)) are extracellular. 3 disulfides stabilise this stretch: Cys48–Cys108, Cys150–Cys207, and Cys252–Cys297. 2 Ig-like C2-type domains span residues 128–226 (PQKP…QRIE) and 231–313 (PTAM…FTLN). Asn288 carries an N-linked (GlcNAc...) asparagine glycan. A helical transmembrane segment spans residues 329–349 (AIIGGIVAFIVFLLLILLIFL). Topologically, residues 350 to 396 (GHYLIRHKGTYLTHEAKGSDDAPDADTAIINAEGGQSGGDDKKEYFI) are cytoplasmic. The segment at 365–396 (AKGSDDAPDADTAIINAEGGQSGGDDKKEYFI) is disordered. The residue at position 386 (Ser386) is a Phosphoserine.

The protein belongs to the nectin family. In terms of assembly, homodimer. Can form trans-heterodimers with NECTIN3. Interacts with EPB41L1, DLG3, PALS2 and CASK. As to expression, mainly expressed in brain, in neuronal cell bodies of cerebellum, cortex, hippocampus, hypothalamus and spinal cord. In spinal cord predominantly expressed in motor neurons. Expressed in axons, presynaptic nerve terminals, glia cell processes.

The protein resides in the cell membrane. It localises to the cell junction. Involved in cell-cell adhesion. Has both calcium-independent homophilic cell-cell adhesion activity and calcium-independent heterophilic cell-cell adhesion activity with IGSF4, NECTIN1 and NECTIN3. Interaction with EPB41L1 may regulate structure or function of cell-cell junctions. The chain is Cell adhesion molecule 3 (Cadm3) from Mus musculus (Mouse).